We begin with the raw amino-acid sequence, 422 residues long: MKLHGLGILVAIILYEQHGFAFQSGQVLSALPRTSRQVQLLQNLTTTYEVVLWQPVTAEFIEKKKEVHFFVNASDVDSVKAHLNVSRIPFNVLMNNVEDLIEQQTFNDTVSPRASASYYEQYHSLNEIYSWIEVITEQHPDMLQKIYIGSSFEKYPLYVLKVSGKEQRIKNAIWIDCGIHAREWISPAFCLWFIGYVTQFHGKENLYTRLLRHVDFYIMPVMNVDGYDYTWKKNRMWRKNRSAHKNNRCVGTDLNRNFASKHWCEKGASSSSCSETYCGLYPESEPEVKAVADFLRRNIDHIKAYISMHSYSQQILFPYSYNRSKSKDHEELSLVASEAVRAIESINKNTRYTHGSGSESLYLAPGGSDDWIYDLGIKYSFTIELRDTGRYGFLLPERYIKPTCAEALAAISKIVWHVIRNT.

The first 21 residues, 1–21 (MKLHGLGILVAIILYEQHGFA), serve as a signal peptide directing secretion. The propeptide at 22-113 (FQSGQVLSAL…QTFNDTVSPR (92 aa)) is activation peptide. 4 N-linked (GlcNAc...) asparagine glycosylation sites follow: Asn43, Asn72, Asn84, and Asn107. The region spanning 121–418 (QYHSLNEIYS…AAISKIVWHV (298 aa)) is the Peptidase M14 domain. A disulfide bridge links Cys177 with Cys190. 2 residues coordinate Zn(2+): His180 and Glu183. Residues 180-183 (HARE) and Arg238 contribute to the substrate site. An N-linked (GlcNAc...) asparagine glycan is attached at Asn240. 2 disulfides stabilise this stretch: Cys249-Cys273 and Cys264-Cys278. A substrate-binding site is contributed by 255-256 (NR). His309 is a binding site for Zn(2+). Residue 310-311 (SY) participates in substrate binding. Asn322 carries N-linked (GlcNAc...) asparagine glycosylation. Residue Tyr362 participates in substrate binding. The active-site Proton donor/acceptor is Glu384.

The protein belongs to the peptidase M14 family. It depends on Zn(2+) as a cofactor. In terms of tissue distribution, plasma; synthesized in the liver.

The protein localises to the secreted. It carries out the reaction Release of C-terminal Arg and Lys from a polypeptide.. With respect to regulation, TAFI/CPB2 is unique among carboxypeptidases in that it spontaneously inactivates with a short half-life, a property that is crucial for its role in controlling blood clot lysis. The zymogen is stabilized by interactions with the activation peptide. Release of the activation peptide increases a dynamic flap mobility and in time this leads to conformational changes that disrupt the catalytic site and expose a cryptic thrombin-cleavage site present at Arg-323. Cleaves C-terminal arginine or lysine residues from biologically active peptides such as kinins or anaphylatoxins in the circulation thereby regulating their activities. Down-regulates fibrinolysis by removing C-terminal lysine residues from fibrin that has already been partially degraded by plasmin. The chain is Carboxypeptidase B2 (Cpb2) from Mus musculus (Mouse).